A 388-amino-acid chain; its full sequence is Succinate--CoA ligase [ADP-forming] subunit beta (388 aa).

ATP is bound by residues lysine 46, glycine 53–glycine 55, glutamate 99, cysteine 102, and glutamate 107. Asparagine 199 and aspartate 213 together coordinate Mg(2+). Residues asparagine 264 and glycine 321 to valine 323 contribute to the substrate site.

The protein belongs to the succinate/malate CoA ligase beta subunit family. As to quaternary structure, heterotetramer of two alpha and two beta subunits. Requires Mg(2+) as cofactor.

The catalysed reaction is succinate + ATP + CoA = succinyl-CoA + ADP + phosphate. The enzyme catalyses GTP + succinate + CoA = succinyl-CoA + GDP + phosphate. It participates in carbohydrate metabolism; tricarboxylic acid cycle; succinate from succinyl-CoA (ligase route): step 1/1. Succinyl-CoA synthetase functions in the citric acid cycle (TCA), coupling the hydrolysis of succinyl-CoA to the synthesis of either ATP or GTP and thus represents the only step of substrate-level phosphorylation in the TCA. The beta subunit provides nucleotide specificity of the enzyme and binds the substrate succinate, while the binding sites for coenzyme A and phosphate are found in the alpha subunit. The polypeptide is Succinate--CoA ligase [ADP-forming] subunit beta (Actinobacillus pleuropneumoniae serotype 7 (strain AP76)).